The following is a 322-amino-acid chain: Protease HtpX homolog (322 aa).

Transmembrane regions (helical) follow at residues 19–39 (ILLI…CYLL) and 61–81 (FINL…IAYF). Zn(2+) is bound at residue His-165. Glu-166 is a catalytic residue. Residue His-169 coordinates Zn(2+). 2 helical membrane-spanning segments follow: residues 175-195 (VRLL…AQIA) and 216-236 (ILIL…ATLM). Residue Glu-245 coordinates Zn(2+).

This sequence belongs to the peptidase M48B family. It depends on Zn(2+) as a cofactor.

The protein resides in the cell inner membrane. The polypeptide is Protease HtpX homolog (Bacteroides fragilis (strain ATCC 25285 / DSM 2151 / CCUG 4856 / JCM 11019 / LMG 10263 / NCTC 9343 / Onslow / VPI 2553 / EN-2)).